The following is a 353-amino-acid chain: Photosystem II D2 protein (353 aa).

Thr-2 is subject to N-acetylthreonine. A Phosphothreonine modification is found at Thr-2. Residues Cys-41 to Thr-61 traverse the membrane as a helical segment. Chlorophyll a is bound at residue His-118. The helical transmembrane segment at Gly-125 to Pro-141 threads the bilayer. 2 residues coordinate pheophytin a: Gln-130 and Asn-143. Residues Val-153–Ser-166 form a helical membrane-spanning segment. His-198 serves as a coordination point for chlorophyll a. Residues Ala-208 to Asp-228 form a helical membrane-spanning segment. Positions 215 and 262 each coordinate a plastoquinone. His-215 contacts Fe cation. A Fe cation-binding site is contributed by His-269. The helical transmembrane segment at Gly-279–Arg-295 threads the bilayer.

It belongs to the reaction center PufL/M/PsbA/D family. PSII is composed of 1 copy each of membrane proteins PsbA, PsbB, PsbC, PsbD, PsbE, PsbF, PsbH, PsbI, PsbJ, PsbK, PsbL, PsbM, PsbT, PsbX, PsbY, PsbZ, Psb30/Ycf12, at least 3 peripheral proteins of the oxygen-evolving complex and a large number of cofactors. It forms dimeric complexes. Requires The D1/D2 heterodimer binds P680, chlorophylls that are the primary electron donor of PSII, and subsequent electron acceptors. It shares a non-heme iron and each subunit binds pheophytin, quinone, additional chlorophylls, carotenoids and lipids. There is also a Cl(-1) ion associated with D1 and D2, which is required for oxygen evolution. The PSII complex binds additional chlorophylls, carotenoids and specific lipids. as cofactor.

It is found in the plastid. It localises to the chloroplast thylakoid membrane. It catalyses the reaction 2 a plastoquinone + 4 hnu + 2 H2O = 2 a plastoquinol + O2. Its function is as follows. Photosystem II (PSII) is a light-driven water:plastoquinone oxidoreductase that uses light energy to abstract electrons from H(2)O, generating O(2) and a proton gradient subsequently used for ATP formation. It consists of a core antenna complex that captures photons, and an electron transfer chain that converts photonic excitation into a charge separation. The D1/D2 (PsbA/PsbD) reaction center heterodimer binds P680, the primary electron donor of PSII as well as several subsequent electron acceptors. D2 is needed for assembly of a stable PSII complex. In Nicotiana tabacum (Common tobacco), this protein is Photosystem II D2 protein.